Here is a 94-residue protein sequence, read N- to C-terminus: Large ribosomal subunit protein bL25 (94 aa).

The protein belongs to the bacterial ribosomal protein bL25 family. In terms of assembly, part of the 50S ribosomal subunit; part of the 5S rRNA/L5/L18/L25 subcomplex. Contacts the 5S rRNA. Binds to the 5S rRNA independently of L5 and L18.

Functionally, this is one of the proteins that binds to the 5S RNA in the ribosome where it forms part of the central protuberance. This is Large ribosomal subunit protein bL25 from Erwinia tasmaniensis (strain DSM 17950 / CFBP 7177 / CIP 109463 / NCPPB 4357 / Et1/99).